Consider the following 224-residue polypeptide: 7-cyano-7-deazaguanine synthase (224 aa).

10–20 (LSGGLDSATVV) is an ATP binding site. Residues cysteine 189, cysteine 199, cysteine 202, and cysteine 205 each contribute to the Zn(2+) site.

This sequence belongs to the QueC family. It depends on Zn(2+) as a cofactor.

It carries out the reaction 7-carboxy-7-deazaguanine + NH4(+) + ATP = 7-cyano-7-deazaguanine + ADP + phosphate + H2O + H(+). The protein operates within purine metabolism; 7-cyano-7-deazaguanine biosynthesis. Its function is as follows. Catalyzes the ATP-dependent conversion of 7-carboxy-7-deazaguanine (CDG) to 7-cyano-7-deazaguanine (preQ(0)). The protein is 7-cyano-7-deazaguanine synthase of Pseudomonas paraeruginosa (strain DSM 24068 / PA7) (Pseudomonas aeruginosa (strain PA7)).